Reading from the N-terminus, the 122-residue chain is Urease subunit beta (122 aa).

The protein belongs to the urease beta subunit family. In terms of assembly, heterotrimer of UreA (gamma), UreB (beta) and UreC (alpha) subunits. Three heterotrimers associate to form the active enzyme.

It localises to the cytoplasm. The catalysed reaction is urea + 2 H2O + H(+) = hydrogencarbonate + 2 NH4(+). It participates in nitrogen metabolism; urea degradation; CO(2) and NH(3) from urea (urease route): step 1/1. This chain is Urease subunit beta, found in Lysinibacillus sphaericus (strain C3-41).